Consider the following 271-residue polypeptide: Extracellular metalloprotease ARB_05317 (271 aa).

The signal sequence occupies residues 1-19 (MRFSVLLTGLAAAGSIATA). Asn136 carries N-linked (GlcNAc...) asparagine glycosylation. Residue His185 participates in Zn(2+) binding. The active site involves Glu186. Residue His189 participates in Zn(2+) binding. Asn200 carries an N-linked (GlcNAc...) asparagine glycan. Cys222 and Cys248 are disulfide-bonded.

The protein belongs to the peptidase M43B family.

Its subcellular location is the secreted. Its function is as follows. Secreted metalloproteinase that allows assimilation of proteinaceous substrates. Plays a pivotal role as a pathogenicity determinant during infections and contributes to the ability of the pathogen to persist within the mammalian host. In Arthroderma benhamiae (strain ATCC MYA-4681 / CBS 112371) (Trichophyton mentagrophytes), this protein is Extracellular metalloprotease ARB_05317.